The chain runs to 128 residues: Protein BEX1 (128 aa).

The disordered stretch occupies residues 1 to 37 (MESKEKRAVNNLSMENTNQENEEKEEKEQVANKGEPL). S105 bears the Phosphoserine mark. The disordered stretch occupies residues 107-128 (SLRAVSTDPPHHDHHDEFCLMP). The span at 115 to 128 (PPHHDHHDEFCLMP) shows a compositional bias: basic and acidic residues. The tract at residues 117-121 (HHDHH) is his cluster. C125 contributes to the Zn(2+) binding site.

Belongs to the BEX family. In terms of assembly, interacts with neurotrophin receptor p75NTR/NGFR. Interacts with OMP. Phosphorylated. Phosphorylation of Ser-105 protects it from the proteasome. Post-translationally, ubiquitinated. Degraded by the proteasome.

It is found in the nucleus. It localises to the cytoplasm. In terms of biological role, signaling adapter molecule involved in p75NTR/NGFR signaling. Plays a role in cell cycle progression and neuronal differentiation. Inhibits neuronal differentiation in response to nerve growth factor (NGF). May act as a link between the cell cycle and neurotrophic factor signaling, possibly by functioning as an upstream modulator of receptor signaling, coordinating biological responses to external signals with internal cellular states. In absence of reductive stress, acts as a pseudosubstrate for the CRL2(FEM1B) complex: associates with FEM1B via zinc, thereby preventing association between FEM1B and its substrates. The polypeptide is Protein BEX1 (BEX1) (Macaca fascicularis (Crab-eating macaque)).